Here is a 96-residue protein sequence, read N- to C-terminus: UPF0235 protein VCM66_0443 (96 aa).

It belongs to the UPF0235 family.

This Vibrio cholerae serotype O1 (strain M66-2) protein is UPF0235 protein VCM66_0443.